A 426-amino-acid polypeptide reads, in one-letter code: Tryptophan synthase beta chain (426 aa).

Lys108 bears the N6-(pyridoxal phosphate)lysine mark.

This sequence belongs to the TrpB family. In terms of assembly, tetramer of two alpha and two beta chains. Requires pyridoxal 5'-phosphate as cofactor.

The catalysed reaction is (1S,2R)-1-C-(indol-3-yl)glycerol 3-phosphate + L-serine = D-glyceraldehyde 3-phosphate + L-tryptophan + H2O. The protein operates within amino-acid biosynthesis; L-tryptophan biosynthesis; L-tryptophan from chorismate: step 5/5. Functionally, the beta subunit is responsible for the synthesis of L-tryptophan from indole and L-serine. The sequence is that of Tryptophan synthase beta chain (trpB) from Thermoplasma volcanium (strain ATCC 51530 / DSM 4299 / JCM 9571 / NBRC 15438 / GSS1).